A 2057-amino-acid polypeptide reads, in one-letter code: Rho guanine nucleotide exchange factor 17 (2057 aa).

3 disordered regions span residues 20-361 (ERWS…DTGG), 375-461 (LASP…SNPD), and 481-559 (RVRK…LKPS). Ser-142 and Ser-152 each carry phosphoserine. Residues 227–249 (ARASSSSSIASSYPVSRSRAASS) show a composition bias toward low complexity. Ser-305 and Ser-308 each carry phosphoserine. Residues 314-323 (GGLGSAGGVG) show a composition bias toward gly residues. Ser-324, Ser-330, Ser-377, Ser-381, Ser-389, Ser-404, and Ser-414 each carry phosphoserine. Positions 382–391 (RGSSRYSSTE) are enriched in polar residues. Over residues 440-451 (PLRDGGLDLDKN) the composition is skewed to basic and acidic residues. Ser-456 is subject to Phosphoserine. Over residues 507–524 (EQSESTLSQSPTSPTTRP) the composition is skewed to low complexity. 2 positions are modified to phosphoserine: Ser-538 and Ser-611. Disordered regions lie at residues 615 to 647 (AGDM…PEPL) and 663 to 952 (LSST…VRHA). A compositionally biased stretch (polar residues) spans 663–672 (LSSTSAQTNH). Ser-689 is modified (phosphoserine). Phosphothreonine occurs at positions 692 and 695. Residues 710 to 719 (PNGTELSNGE) show a composition bias toward polar residues. A Phosphoserine modification is found at Ser-728. Residues 747–760 (SVDSNLLGSLNSKT) are compositionally biased toward polar residues. The segment covering 820–829 (SLSDPSRRGE) has biased composition (basic and acidic residues). Position 906 is a phosphoserine (Ser-906). Basic residues predominate over residues 909-920 (LTRRGSKKRPAR). Residues 922 to 931 (SHQELRREEG) are compositionally biased toward basic and acidic residues. Residues 933–944 (QDQTGSLTQTRS) are compositionally biased toward polar residues. Phosphoserine occurs at positions 953 and 994. The span at 1015 to 1027 (GPVDLPCLPPSAP) shows a compositional bias: pro residues. The interval 1015-1054 (GPVDLPCLPPSAPPSTETKPSGAARATPDEPAPASKCCSK) is disordered. A DH domain is found at 1059–1247 (MRKHVTMTLL…KQVAERINKG (189 aa)). Residue Ser-1324 is modified to Phosphoserine. Disordered stretches follow at residues 1555–1713 (RCPR…SSRG) and 1983–2050 (CSTP…DSTN). The span at 1579 to 1589 (LDVEATAEEEA) shows a compositional bias: acidic residues. Residues 1638–1674 (SPSPSGTLQSQASQSTISSSFGNEETPSSKEATAETT) show a composition bias toward low complexity.

Its function is as follows. Acts as a guanine nucleotide exchange factor (GEF) for RhoA GTPases. This chain is Rho guanine nucleotide exchange factor 17 (Arhgef17), found in Mus musculus (Mouse).